The primary structure comprises 533 residues: SH3 and F-BAR domain-containing protein DDB_G0271676 (533 aa).

Residues 5–258 enclose the F-BAR domain; it reads RQFSEDLWDK…GIESIDRERD (254 aa). A coiled-coil region spans residues 76 to 186; sequence REQLELIGAL…ADKGDNEYRE (111 aa). Basic and acidic residues-rich tracts occupy residues 126 to 155 and 162 to 184; these read LKTA…EDLS and KEQK…DNEY. 2 disordered regions span residues 126 to 184 and 301 to 405; these read LKTA…DNEY and SRKS…INSN. 4 stretches are compositionally biased toward low complexity: residues 318–327, 340–360, 372–385, and 392–405; these read SIISSPQQPQ, NIII…NNSN, PQQQ…QLNN, and SLSK…INSN. 2 SH3 domains span residues 406-468 and 476-533; these read SNGE…DSSD and VAGR…VQVI.

The protein is SH3 and F-BAR domain-containing protein DDB_G0271676 of Dictyostelium discoideum (Social amoeba).